A 209-amino-acid chain; its full sequence is ATP-dependent dethiobiotin synthetase BioD (209 aa).

13-18 is a binding site for ATP; it reads DIGKTV. Thr-17 provides a ligand contact to Mg(2+). The active site involves Lys-33. Arg-47 and Glu-100 together coordinate Mg(2+). ATP is bound by residues 100–103 and 184–186; these read EGAG and PRL.

The protein belongs to the dethiobiotin synthetase family. Homodimer. Mg(2+) is required as a cofactor.

The protein resides in the cytoplasm. The catalysed reaction is (7R,8S)-7,8-diammoniononanoate + CO2 + ATP = (4R,5S)-dethiobiotin + ADP + phosphate + 3 H(+). Its pathway is cofactor biosynthesis; biotin biosynthesis; biotin from 7,8-diaminononanoate: step 1/2. Catalyzes a mechanistically unusual reaction, the ATP-dependent insertion of CO2 between the N7 and N8 nitrogen atoms of 7,8-diaminopelargonic acid (DAPA, also called 7,8-diammoniononanoate) to form a ureido ring. The sequence is that of ATP-dependent dethiobiotin synthetase BioD from Rhodopseudomonas palustris (strain BisB18).